The sequence spans 353 residues: Quinolinate synthase (353 aa).

The iminosuccinate site is built by histidine 47 and serine 68. [4Fe-4S] cluster is bound at residue cysteine 113. Iminosuccinate-binding positions include tyrosine 139–asparagine 141 and serine 156. Cysteine 200 contributes to the [4Fe-4S] cluster binding site. Iminosuccinate is bound by residues histidine 226–glutamate 228 and threonine 243. Cysteine 297 contacts [4Fe-4S] cluster.

It belongs to the quinolinate synthase family. Type 1 subfamily. [4Fe-4S] cluster serves as cofactor.

It is found in the cytoplasm. It carries out the reaction iminosuccinate + dihydroxyacetone phosphate = quinolinate + phosphate + 2 H2O + H(+). It functions in the pathway cofactor biosynthesis; NAD(+) biosynthesis; quinolinate from iminoaspartate: step 1/1. Its function is as follows. Catalyzes the condensation of iminoaspartate with dihydroxyacetone phosphate to form quinolinate. This chain is Quinolinate synthase, found in Erwinia tasmaniensis (strain DSM 17950 / CFBP 7177 / CIP 109463 / NCPPB 4357 / Et1/99).